Consider the following 184-residue polypeptide: MEKPMASSGPAELFTRVDDYSVANAAAAANEGIVMTTLDAAVNWARKNSIWPMTFGLACCAIEMMSMSASRFDIARFGAEVFRGSPRQSDLMIIAGRVSNKMAPVIRHLYQQMPEPKWAISMGACATSTGVFNNYALIPVNQVIPIDVFVPGCPPRPEQLIYALMMLQEKIKNQSGTVKSVLNL.

Residues Cys-59, Cys-60, Cys-125, and Cys-153 each contribute to the [4Fe-4S] cluster site.

The protein belongs to the complex I 20 kDa subunit family. As to quaternary structure, NDH-1 is composed of 14 different subunits. Subunits NuoB, C, D, E, F, and G constitute the peripheral sector of the complex. The cofactor is [4Fe-4S] cluster.

It localises to the cell inner membrane. It catalyses the reaction a quinone + NADH + 5 H(+)(in) = a quinol + NAD(+) + 4 H(+)(out). In terms of biological role, NDH-1 shuttles electrons from NADH, via FMN and iron-sulfur (Fe-S) centers, to quinones in the respiratory chain. Couples the redox reaction to proton translocation (for every two electrons transferred, four hydrogen ions are translocated across the cytoplasmic membrane), and thus conserves the redox energy in a proton gradient. The sequence is that of NADH-quinone oxidoreductase subunit B 2 from Solibacter usitatus (strain Ellin6076).